The chain runs to 525 residues: Protein disulfide-isomerase A2 (525 aa).

A signal peptide spans 1 to 21 (MSCQLLPVLLLLLLRASCPWG). In terms of domain architecture, Thioredoxin 1 spans 27-152 (RSPSEEPPEE…IAEWLRRRVG (126 aa)). Residues Cys71 and Cys74 each act as nucleophile in the active site. A disulfide bridge connects residues Cys71 and Cys74. N-linked (GlcNAc...) asparagine glycans are attached at residues Asn127 and Asn284. The Thioredoxin 2 domain maps to 367–496 (VLNGQVKPYL…FSKFLDNGGV (130 aa)). Active-site nucleophile residues include Cys418 and Cys421. Cys418 and Cys421 form a disulfide bridge. Positions 498–525 (PTEEPLEEPAAPFPEPPANSTMGSKEEL) are disordered. A glycan (N-linked (GlcNAc...) asparagine) is linked at Asn516. Polar residues predominate over residues 516 to 525 (NSTMGSKEEL). The Prevents secretion from ER signature appears at 522-525 (KEEL).

This sequence belongs to the protein disulfide isomerase family. In terms of assembly, monomer; predominantly as monomer under reducing conditions. Homodimer; disulfide-linked. Part of a large chaperone multiprotein complex comprising DNAJB11, HSP90B1, HSPA5, HYOU, PDIA2, PDIA4, PDIA6, PPIB, SDF2L1, UGGT1 and very small amounts of ERP29, but not, or at very low levels, CALR nor CANX. In terms of processing, the disulfide-linked homodimer exhibits an enhanced chaperone activity. Glycosylated.

It is found in the endoplasmic reticulum lumen. It catalyses the reaction Catalyzes the rearrangement of -S-S- bonds in proteins.. Acts as an intracellular estrogen-binding protein. May be involved in modulating cellular levels and biological functions of estrogens in the pancreas. May act as a chaperone that inhibits aggregation of misfolded proteins. The sequence is that of Protein disulfide-isomerase A2 (PDIA2) from Pongo abelii (Sumatran orangutan).